The primary structure comprises 48 residues: Large ribosomal subunit protein bL32 (48 aa).

Positions 1–20 (MAVPDRRVSKTRAAKRRTHY) are disordered. Residues 9-20 (SKTRAAKRRTHY) show a composition bias toward basic residues.

Belongs to the bacterial ribosomal protein bL32 family.

The protein is Large ribosomal subunit protein bL32 of Helicobacter acinonychis (strain Sheeba).